The primary structure comprises 85 residues: Toxin Cll5c* (85 aa).

The signal sequence occupies residues 1 to 17 (MNSLLIITACLVLFVWA). The region spanning 18–83 (KEGYLVNKST…TYPLPNKSCS (66 aa)) is the LCN-type CS-alpha/beta domain. Intrachain disulfides connect cysteine 29/cysteine 82, cysteine 33/cysteine 58, cysteine 42/cysteine 63, and cysteine 46/cysteine 65. Residues 84–85 (KK) constitute a propeptide, removed by a carboxypeptidase.

This sequence belongs to the long (4 C-C) scorpion toxin superfamily. Sodium channel inhibitor family. Beta subfamily. In terms of tissue distribution, expressed by the venom gland.

Its subcellular location is the secreted. Beta toxins bind voltage-independently at site-4 of sodium channels (Nav) and shift the voltage of activation toward more negative potentials thereby affecting sodium channel activation and promoting spontaneous and repetitive firing. This chain is Toxin Cll5c*, found in Centruroides limpidus (Mexican scorpion).